Here is a 321-residue protein sequence, read N- to C-terminus: uncharacterized protein (321 aa).

A run of 10 helical transmembrane segments spans residues 6-26 (LFIG…MFPV), 37-57 (FYFS…LLLV), 72-92 (WIIL…FLGQ), 100-120 (IMTA…ILWG), 134-154 (ILIA…SFFF), 160-180 (LFSI…TMGG), 196-216 (CLFG…QGYV), 223-243 (VIAA…IIAL), 255-275 (SING…IMVI), and 277-297 (GYNI…GLIL). 2 consecutive EamA domains span residues 18 to 146 (MSWG…MVIT) and 175 to 300 (VYTM…LNNI).

The protein belongs to the EamA transporter family.

It localises to the cell membrane. This is an uncharacterized protein from Bacillus subtilis (strain 168).